The primary structure comprises 384 residues: Lipid-A-disaccharide synthase (384 aa).

Belongs to the LpxB family.

It catalyses the reaction 2-N,3-O-bis[(3R)-3-hydroxytetradecanoyl]-alpha-D-glucosaminyl 1-phosphate + UDP-2-N,3-O-bis[(3R)-3-hydroxytetradecanoyl]-alpha-D-glucosamine = lipid A disaccharide (E. coli) + UDP + H(+). The catalysed reaction is a lipid X + a UDP-2-N,3-O-bis[(3R)-3-hydroxyacyl]-alpha-D-glucosamine = a lipid A disaccharide + UDP + H(+). The protein operates within glycolipid biosynthesis; lipid IV(A) biosynthesis; lipid IV(A) from (3R)-3-hydroxytetradecanoyl-[acyl-carrier-protein] and UDP-N-acetyl-alpha-D-glucosamine: step 5/6. Its function is as follows. Condensation of UDP-2,3-diacylglucosamine and 2,3-diacylglucosamine-1-phosphate to form lipid A disaccharide, a precursor of lipid A, a phosphorylated glycolipid that anchors the lipopolysaccharide to the outer membrane of the cell. The protein is Lipid-A-disaccharide synthase of Blochmanniella floridana.